The sequence spans 640 residues: Threonine--tRNA ligase (640 aa).

In terms of domain architecture, TGS spans 1–61 (MPIITLPDGN…EKDSEVNIIT (61 aa)). The tract at residues 242–533 (DHRRIAKQMS…LIEHYAGRMP (292 aa)) is catalytic. Residues C333, H384, and H510 each contribute to the Zn(2+) site.

The protein belongs to the class-II aminoacyl-tRNA synthetase family. Homodimer. Requires Zn(2+) as cofactor.

The protein localises to the cytoplasm. The catalysed reaction is tRNA(Thr) + L-threonine + ATP = L-threonyl-tRNA(Thr) + AMP + diphosphate + H(+). Its function is as follows. Catalyzes the attachment of threonine to tRNA(Thr) in a two-step reaction: L-threonine is first activated by ATP to form Thr-AMP and then transferred to the acceptor end of tRNA(Thr). Also edits incorrectly charged L-seryl-tRNA(Thr). The chain is Threonine--tRNA ligase from Prochlorococcus marinus (strain MIT 9303).